A 506-amino-acid polypeptide reads, in one-letter code: Acyl-CoA-binding domain-containing protein 5 (506 aa).

The 90-residue stretch at 44–133 (YETRFEAAVK…MKKIIETMPM (90 aa)) folds into the ACB domain. An acyl-CoA-binding positions include 55 to 64 (IQSLPKNGSF), 75 to 79 (YSFYK), lysine 101, and tyrosine 120. Positions 175-217 (AKAVNGKAESSDSGAESEEEEAQEELKGAEQSGSDDKKMMTKS) are disordered. Residues 181-209 (KAESSDSGAESEEEEAQEELKGAEQSGSD) adopt a coiled-coil conformation. Serine 184, serine 185, serine 187, serine 191, serine 206, and serine 233 each carry phosphoserine. Residues 198–217 (EELKGAEQSGSDDKKMMTKS) are compositionally biased toward basic and acidic residues. Disordered regions lie at residues 234–302 (FAQD…CDSM) and 345–417 (AVKG…RGSR). Residues 238-257 (SDIHTDSSRSARRSEDKKPT) are compositionally biased toward basic and acidic residues. The segment covering 258–267 (DQSSQQTGNT) has biased composition (polar residues). Residue serine 301 is modified to Phosphoserine. The segment covering 348–360 (GKGEVKHGGEDGR) has biased composition (basic and acidic residues). Position 403 is a phosphoserine (serine 403). Basic and acidic residues predominate over residues 406-416 (DGERWGSDRGS). The stretch at 426–451 (LVLIRLQEDMQNVLQRLHKLETLTAS) forms a coiled coil. An N6-acetyllysine modification is found at lysine 444. Residues 478 to 498 (GALAFAIIWPFIAQWLVHLYY) form a helical membrane-spanning segment.

It belongs to the ATG37 family.

It is found in the peroxisome membrane. Functionally, acyl-CoA binding protein which acts as the peroxisome receptor for pexophagy but is dispensable for aggrephagy and nonselective autophagy. Binds medium- and long-chain acyl-CoA esters. This Rattus norvegicus (Rat) protein is Acyl-CoA-binding domain-containing protein 5 (Acbd5).